We begin with the raw amino-acid sequence, 132 residues long: Ribonuclease VapC (132 aa).

Residues 4–123 (YMLDTNIVIY…SNNLREFERV (120 aa)) enclose the PINc domain. Residues aspartate 7 and aspartate 98 each contribute to the Mg(2+) site.

Belongs to the PINc/VapC protein family. In terms of assembly, probably forms a complex with cognate antitoxin VapB2. It depends on Mg(2+) as a cofactor.

In terms of biological role, toxic component of a type II toxin-antitoxin (TA) system. Acts as an RNase. Its toxic effect is neutralized by cognate antitoxin VapB2 but not by non-cognate antitoxin VapB1. This Haemophilus influenzae (strain 86-028NP) protein is Ribonuclease VapC.